Reading from the N-terminus, the 400-residue chain is MKEKIVLAYSGGLDTSVAVKWLIDKGYDVVAVCLDVGEGKDLDVVYSKALDMGAVECHIIDATKEFSDDFVSYAIKGNLMYENSYPLVSALSRPLIAKKLVEIAEQTNSVGIAHGCTGKGNDQVRFEVAIKALNPNLKAFAPVREWGWSREEEIDYAIKHNIPVGINHDSPYSIDQNLWGRANECGILEDPYAAPPKDAYDLTAELEDTPDTPDEIILSFKNGVPVQLNHQDYDLDQLILTLNELAGKHGIGRIDHVENRLAGIKSREIYETPGAEVILKAHKALETLTLTKDVAHFKPVIEKQFAEQTYNGLWFSPLTDSLKLFIDSTQQYVEGDVRIKLFKGNAIVNGRKSLYTLYDEKLATYTKEDAFNQSAAVGFIDIYGLPTQVNAYLHGGYSNE.

8-16 (AYSGGLDTS) is an ATP binding site. Tyr85 lines the L-citrulline pocket. Gly115 is an ATP binding site. L-aspartate-binding residues include Thr117, Asn121, and Asp122. Position 121 (Asn121) interacts with L-citrulline. L-citrulline is bound by residues Arg125, Ser173, Glu258, and Tyr270.

It belongs to the argininosuccinate synthase family. Type 1 subfamily. In terms of assembly, homotetramer.

The protein localises to the cytoplasm. The enzyme catalyses L-citrulline + L-aspartate + ATP = 2-(N(omega)-L-arginino)succinate + AMP + diphosphate + H(+). It participates in amino-acid biosynthesis; L-arginine biosynthesis; L-arginine from L-ornithine and carbamoyl phosphate: step 2/3. The polypeptide is Argininosuccinate synthase (Staphylococcus haemolyticus (strain JCSC1435)).